The primary structure comprises 380 residues: Gap junction gamma-1 protein (380 aa).

Over 1-22 the chain is Cytoplasmic; sequence MSWSFLTRLLDEISNHSTFVGK. Residues 23 to 45 form a helical membrane-spanning segment; that stretch reads IWLTLFIIFRIVLTVVGGESIYY. Over 46–75 the chain is Extracellular; it reads DEQSKFVCNTQQPGCENVCYDAFAPLSHVR. A helical membrane pass occupies residues 76–95; the sequence is FWVFQIILITTPTIMYLGFA. Topologically, residues 96–171 are cytoplasmic; the sequence is MHKIARSNDV…RRIKRDGLMK (76 aa). The helical transmembrane segment at 172–194 threads the bilayer; it reads VYILQLLSRIIFEVGFLFGQYIL. Residues 195 to 228 are Extracellular-facing; that stretch reads YGFEVAPSYVCTRSPCPHTVDCFVSRPTEKTIFL. The chain crosses the membrane as a helical span at residues 229 to 251; it reads LIMYAVSCLCLSLTVLEILHLGL. The Cytoplasmic portion of the chain corresponds to 252–380; sequence SGIRDAFRRR…GSKCEKGIHA (129 aa). Residues 337-380 are disordered; that stretch reads AYQNGESSPSRSSSPESNGTAVEQNRLNFAQEKQGSKCEKGIHA. Residues 342-353 show a composition bias toward low complexity; it reads ESSPSRSSSPES. A compositionally biased stretch (polar residues) spans 354–369; sequence NGTAVEQNRLNFAQEK. Over residues 370–380 the composition is skewed to basic and acidic residues; that stretch reads QGSKCEKGIHA.

It belongs to the connexin family. Gamma-type subfamily. As to quaternary structure, a connexon is composed of a hexamer of connexins.

It localises to the cell membrane. The protein resides in the cell junction. Its subcellular location is the gap junction. Its function is as follows. One gap junction consists of a cluster of closely packed pairs of transmembrane channels, the connexons, through which materials of low MW diffuse from one cell to a neighboring cell. Participates in a developmental pathway for formation of the notochord and tail. This chain is Gap junction gamma-1 protein (gjc1), found in Danio rerio (Zebrafish).